Consider the following 460-residue polypeptide: tRNA(Ile)-lysidine synthase (460 aa).

An ATP-binding site is contributed by 30-35; it reads SGGLDS.

Belongs to the tRNA(Ile)-lysidine synthase family.

The protein resides in the cytoplasm. The catalysed reaction is cytidine(34) in tRNA(Ile2) + L-lysine + ATP = lysidine(34) in tRNA(Ile2) + AMP + diphosphate + H(+). Ligates lysine onto the cytidine present at position 34 of the AUA codon-specific tRNA(Ile) that contains the anticodon CAU, in an ATP-dependent manner. Cytidine is converted to lysidine, thus changing the amino acid specificity of the tRNA from methionine to isoleucine. This is tRNA(Ile)-lysidine synthase from Yersinia pestis.